A 365-amino-acid chain; its full sequence is Probable dual-specificity RNA methyltransferase RlmN (365 aa).

Glu-108 functions as the Proton acceptor in the catalytic mechanism. Residues Tyr-114 to Arg-352 enclose the Radical SAM core domain. Cys-121 and Cys-358 are disulfide-bonded. Residues Cys-128, Cys-132, and Cys-135 each contribute to the [4Fe-4S] cluster site. S-adenosyl-L-methionine is bound by residues Gly-179 to Glu-180, Ser-213, Ser-236 to His-238, and Asn-315. Cys-358 functions as the S-methylcysteine intermediate in the catalytic mechanism.

It belongs to the radical SAM superfamily. RlmN family. It depends on [4Fe-4S] cluster as a cofactor.

It is found in the cytoplasm. It catalyses the reaction adenosine(2503) in 23S rRNA + 2 reduced [2Fe-2S]-[ferredoxin] + 2 S-adenosyl-L-methionine = 2-methyladenosine(2503) in 23S rRNA + 5'-deoxyadenosine + L-methionine + 2 oxidized [2Fe-2S]-[ferredoxin] + S-adenosyl-L-homocysteine. The catalysed reaction is adenosine(37) in tRNA + 2 reduced [2Fe-2S]-[ferredoxin] + 2 S-adenosyl-L-methionine = 2-methyladenosine(37) in tRNA + 5'-deoxyadenosine + L-methionine + 2 oxidized [2Fe-2S]-[ferredoxin] + S-adenosyl-L-homocysteine. Specifically methylates position 2 of adenine 2503 in 23S rRNA and position 2 of adenine 37 in tRNAs. The chain is Probable dual-specificity RNA methyltransferase RlmN from Mycolicibacterium gilvum (strain PYR-GCK) (Mycobacterium gilvum (strain PYR-GCK)).